A 273-amino-acid chain; its full sequence is NAD-dependent protein deacylase (273 aa).

The 253-residue stretch at 20 to 272 (RERLRQRIFF…PEFVEKLLKG (253 aa)) folds into the Deacetylase sirtuin-type domain. 48–67 (GAGISAESGIRTFRAADGLW) serves as a coordination point for NAD(+). Residues Y92 and R95 each coordinate substrate. 129-132 (QNID) serves as a coordination point for NAD(+). The Proton acceptor role is filled by H147. The Zn(2+) site is built by C155 and C174. NAD(+) is bound by residues 214-216 (GTS), 240-242 (NLE), and A258.

This sequence belongs to the sirtuin family. Class III subfamily. Zn(2+) serves as cofactor.

The protein resides in the cytoplasm. It catalyses the reaction N(6)-acetyl-L-lysyl-[protein] + NAD(+) + H2O = 2''-O-acetyl-ADP-D-ribose + nicotinamide + L-lysyl-[protein]. It carries out the reaction N(6)-succinyl-L-lysyl-[protein] + NAD(+) + H2O = 2''-O-succinyl-ADP-D-ribose + nicotinamide + L-lysyl-[protein]. The enzyme catalyses N(6)-(2-hydroxyisobutanoyl)-L-lysyl-[protein] + NAD(+) + H2O = 2''-O-(2-hydroxyisobutanoyl)-ADP-D-ribose + nicotinamide + L-lysyl-[protein]. In terms of biological role, NAD-dependent lysine deacetylase that specifically removes acetyl groups on target proteins. Also acts as a protein-lysine deacylase by mediating protein desuccinylation and de-2-hydroxyisobutyrylation. Modulates the activities of several proteins which are inactive in their acylated form. The chain is NAD-dependent protein deacylase from Escherichia coli O157:H7.